Reading from the N-terminus, the 270-residue chain is Formamidopyrimidine-DNA glycosylase (270 aa).

The active-site Schiff-base intermediate with DNA is proline 2. Glutamate 3 acts as the Proton donor in catalysis. The active-site Proton donor; for beta-elimination activity is lysine 58. DNA is bound by residues histidine 91, arginine 110, and arginine 151. The segment at 236–270 (FVYGRGGEFCKVCGSTLREIRLGQRASVYCPRCQR) adopts an FPG-type zinc-finger fold. Arginine 260 serves as the catalytic Proton donor; for delta-elimination activity.

It belongs to the FPG family. As to quaternary structure, monomer. Requires Zn(2+) as cofactor.

The catalysed reaction is Hydrolysis of DNA containing ring-opened 7-methylguanine residues, releasing 2,6-diamino-4-hydroxy-5-(N-methyl)formamidopyrimidine.. The enzyme catalyses 2'-deoxyribonucleotide-(2'-deoxyribose 5'-phosphate)-2'-deoxyribonucleotide-DNA = a 3'-end 2'-deoxyribonucleotide-(2,3-dehydro-2,3-deoxyribose 5'-phosphate)-DNA + a 5'-end 5'-phospho-2'-deoxyribonucleoside-DNA + H(+). In terms of biological role, involved in base excision repair of DNA damaged by oxidation or by mutagenic agents. Acts as a DNA glycosylase that recognizes and removes damaged bases. Has a preference for oxidized purines, such as 7,8-dihydro-8-oxoguanine (8-oxoG). Has AP (apurinic/apyrimidinic) lyase activity and introduces nicks in the DNA strand. Cleaves the DNA backbone by beta-delta elimination to generate a single-strand break at the site of the removed base with both 3'- and 5'-phosphates. The sequence is that of Formamidopyrimidine-DNA glycosylase from Pseudomonas paraeruginosa (strain DSM 24068 / PA7) (Pseudomonas aeruginosa (strain PA7)).